We begin with the raw amino-acid sequence, 297 residues long: uncharacterized protein (297 aa).

Residues 191-211 form a helical membrane-spanning segment; the sequence is VMIILSCSNITILAVLSIVGL. A compositionally biased stretch (polar residues) spans 275–287; that stretch reads SKTSETQSVSGST. The disordered stretch occupies residues 275–297; that stretch reads SKTSETQSVSGSTHSDEKLTAPM. The segment covering 288–297 has biased composition (basic and acidic residues); it reads HSDEKLTAPM.

It localises to the host membrane. This is an uncharacterized protein from Cryphonectria parasitica mycoreovirus 1 (strain 9B21) (CpMYRV-1).